The primary structure comprises 116 residues: Protein RALF-like 33 (116 aa).

Residues 1–23 (MRGLSTKPVAIIIAILTVHFLFA) form the signal peptide. Positions 24–67 (AVTSQSSGDFVPIESKCNGTIAECSLSTAEEEFEMDSEINRRIL) are cleaved as a propeptide — removed in mature form. An N-linked (GlcNAc...) asparagine glycan is attached at Asn41. Disulfide bonds link Cys85-Cys95 and Cys108-Cys114.

It belongs to the plant rapid alkalinization factor (RALF) family. In terms of processing, proteolytically cleaved, probably by S1P, a subtilisin-like serine protease (subtilase). In terms of tissue distribution, expressed in roots, stems, leaves and plants.

Its subcellular location is the secreted. Its function is as follows. Cell signaling peptide that may regulate plant stress, growth, and development. Mediates a rapid alkalinization of extracellular space by mediating a transient increase in the cytoplasmic Ca(2+) concentration leading to a calcium-dependent signaling events through a cell surface receptor and a concomitant activation of some intracellular mitogen-activated protein kinases. The chain is Protein RALF-like 33 (RALFL33) from Arabidopsis thaliana (Mouse-ear cress).